A 213-amino-acid polypeptide reads, in one-letter code: Putative 3-methyladenine DNA glycosylase (213 aa).

Belongs to the DNA glycosylase MPG family.

The sequence is that of Putative 3-methyladenine DNA glycosylase from Latilactobacillus sakei subsp. sakei (strain 23K) (Lactobacillus sakei subsp. sakei).